The following is a 1497-amino-acid chain: Dual oxidase 1 (1497 aa).

The N-terminal stretch at 1 to 21 (MRSKHVLYIAILFSSIFGGKG) is a signal peptide. Residues 22–587 (IQQNEEFQRY…MQSTYWTDND (566 aa)) lie on the Extracellular side of the membrane. Positions 26 to 590 (EEFQRYDGWY…TYWTDNDTTY (565 aa)) are peroxidase-like; mediates peroxidase activity. N-linked (GlcNAc...) asparagine glycosylation is found at N66, N305, N567, and N586. A helical membrane pass occupies residues 588–608 (TTYVFTLIGLACVPLICYGIG). The Cytoplasmic segment spans residues 609-986 (RYLVNRRIAI…VSAFLETYRQ (378 aa)). 2 consecutive EF-hand domains span residues 817-852 (ANNE…FVNA) and 853-888 (PQKQ…LNQT). A helical transmembrane segment spans residues 987–1007 (HVFIVFCFVAINLVLFFERFW). At 1008 to 1024 (HYRYMAENRDLRRVMGA) the chain is on the extracellular side. A helical membrane pass occupies residues 1025-1045 (GIAITRGAAGALSFCMALILL). The Ferric oxidoreductase domain maps to 1030–1210 (RGAAGALSFC…FVIDRIIGLM (181 aa)). Residues 1046–1068 (TVCRNIITLLRETVIAQYIPFDS) lie on the Cytoplasmic side of the membrane. A helical transmembrane segment spans residues 1069-1089 (AIAFHKIVALFAAFWATLHTV). The Extracellular portion of the chain corresponds to 1090–1134 (GHCVNFYHVGTQSQEGLACLFQEAFFGSNFLPSISYWFFSTITGL). A helical transmembrane segment spans residues 1135 to 1155 (TGIALVAVMCIIYVFALPCFI). Over 1156–1163 (KRAYHAFR) the chain is Cytoplasmic. The chain crosses the membrane as a helical span at residues 1164-1184 (LTHLLNIAFYALTLLHGLPKL). Over 1185-1189 (LDSPK) the chain is Extracellular. A helical membrane pass occupies residues 1190 to 1210 (FGYYVVGPIVLFVIDRIIGLM). The FAD-binding FR-type domain maps to 1211–1318 (QYYKKLEIVN…KGPYGDGNQE (108 aa)). The Cytoplasmic segment spans residues 1211-1497 (QYYKKLEIVN…PSFAHRFETF (287 aa)).

The protein in the N-terminal section; belongs to the peroxidase family. As to quaternary structure, interacts with doxa-1 and tsp-15. Interacts with rho-1. As to expression, expressed in hypodermal cells.

It is found in the membrane. The catalysed reaction is NADH + O2 + H(+) = H2O2 + NAD(+). The enzyme catalyses NADPH + O2 + H(+) = H2O2 + NADP(+). Peroxidase activity is inhibited by aminobenzohydrazide. Its function is as follows. Plays a role in cuticle biogenesis. In complex with doxa-1 and tsp-15, produces reactive oxygen species (ROS), which are probably used by mlt-7 for tyrosine cross-linking, thus stabilizing cuticular extracellular matrix. May regulate the production of ROS by playing a role in modulating proline catabolism. Required in combination with mlt-7 for correct formation of cross-links in cuticle collagens. Association with the GTPase rho-1 promotes ROS production and this interaction may be modulated by memo-1, in order to control the oxidative stress response and longevity. This chain is Dual oxidase 1, found in Caenorhabditis elegans.